Here is a 469-residue protein sequence, read N- to C-terminus: Putative dipeptidase SH1171 (469 aa).

His-84 provides a ligand contact to Zn(2+). Residue Asp-86 is part of the active site. Asp-115 contributes to the Zn(2+) binding site. Residue Glu-149 is the Proton acceptor of the active site. Positions 150, 173, and 440 each coordinate Zn(2+).

This sequence belongs to the peptidase M20A family. Zn(2+) is required as a cofactor.

The chain is Putative dipeptidase SH1171 from Staphylococcus haemolyticus (strain JCSC1435).